Reading from the N-terminus, the 579-residue chain is Carboxysome shell carbonic anhydrase (579 aa).

The segment at 72–95 (GGGRVRSARDQRQPGWVRRDKGAT) is disordered. Basic and acidic residues predominate over residues 78–93 (SARDQRQPGWVRRDKG). Residue C240 coordinates Zn(2+). Residue D242 is the Proton acceptor of the active site. Zn(2+) contacts are provided by H308 and C319.

This sequence belongs to the beta-class carbonic anhydrase family. CsoSCA subfamily. As to quaternary structure, homodimer. Zn(2+) is required as a cofactor.

It is found in the carboxysome. It catalyses the reaction hydrogencarbonate + H(+) = CO2 + H2O. Its activity is regulated as follows. Inhibited by dithiothreitol, partially inhibited by acetatzolamide and cyanide. Its function is as follows. Reversible hydration of carbon dioxide. Essential for photosynthetic carbon dioxide fixation, supplies CO(2) to RuBisCO (ribulose bisphosphate carboxylase, cbbL-cbbS) in the carboxysome. The chain is Carboxysome shell carbonic anhydrase from Parasynechococcus marenigrum (strain WH8102).